Here is a 531-residue protein sequence, read N- to C-terminus: Plant UBX domain-containing protein 11 (531 aa).

Position 1 is an N-acetylmethionine (methionine 1). Low complexity predominate over residues 160-173 (AVASPSTASSVQPS). Disordered regions lie at residues 160–316 (AVAS…KASD) and 441–531 (ANAS…NDRR). Polar residues-rich tracts occupy residues 174 to 190 (ETKS…NNDG) and 201 to 214 (EPSN…NQPA). The segment covering 290 to 301 (VDTKETMKPKDE) has biased composition (basic and acidic residues). The region spanning 312 to 390 (KKASDVHLNI…RLFDRQALVV (79 aa)) is the UBX domain. Composition is skewed to polar residues over residues 441–478 (ANAS…GRSN) and 486–496 (TSRIGSNIHTL).

Interacts with CDC48A.

The protein is Plant UBX domain-containing protein 11 of Arabidopsis thaliana (Mouse-ear cress).